Reading from the N-terminus, the 235-residue chain is Small ribosomal subunit protein uS3 (235 aa).

Residues 39-107 (VRKFLNKELM…PAQINIAEVK (69 aa)) enclose the KH type-2 domain.

Belongs to the universal ribosomal protein uS3 family. As to quaternary structure, part of the 30S ribosomal subunit. Forms a tight complex with proteins S10 and S14.

Its function is as follows. Binds the lower part of the 30S subunit head. Binds mRNA in the 70S ribosome, positioning it for translation. In Actinobacillus succinogenes (strain ATCC 55618 / DSM 22257 / CCUG 43843 / 130Z), this protein is Small ribosomal subunit protein uS3.